A 396-amino-acid chain; its full sequence is Stearoyl-[acyl-carrier-protein] 9-desaturase, chloroplastic (396 aa).

Residues 1–33 (MAIRINTATFQSDLYRSFAFPQPKPLRSPKFAM) constitute a chloroplast transit peptide. Residues glutamate 138, glutamate 176, histidine 179, glutamate 229, glutamate 262, and histidine 265 each coordinate Fe cation.

It belongs to the fatty acid desaturase type 2 family. As to quaternary structure, homodimer. The cofactor is Fe(2+).

Its subcellular location is the plastid. It localises to the chloroplast. The enzyme catalyses octadecanoyl-[ACP] + 2 reduced [2Fe-2S]-[ferredoxin] + O2 + 2 H(+) = (9Z)-octadecenoyl-[ACP] + 2 oxidized [2Fe-2S]-[ferredoxin] + 2 H2O. The protein operates within lipid metabolism; fatty acid metabolism. Its function is as follows. Converts stearoyl-ACP to oleoyl-ACP by introduction of a cis double bond between carbons 9 and 10 of the acyl chain. In Helianthus annuus (Common sunflower), this protein is Stearoyl-[acyl-carrier-protein] 9-desaturase, chloroplastic.